The following is a 119-amino-acid chain: Large ribosomal subunit protein uL22 (119 aa).

Belongs to the universal ribosomal protein uL22 family. As to quaternary structure, part of the 50S ribosomal subunit.

Functionally, this protein binds specifically to 23S rRNA; its binding is stimulated by other ribosomal proteins, e.g. L4, L17, and L20. It is important during the early stages of 50S assembly. It makes multiple contacts with different domains of the 23S rRNA in the assembled 50S subunit and ribosome. The globular domain of the protein is located near the polypeptide exit tunnel on the outside of the subunit, while an extended beta-hairpin is found that lines the wall of the exit tunnel in the center of the 70S ribosome. The protein is Large ribosomal subunit protein uL22 of Rickettsia peacockii (strain Rustic).